The sequence spans 175 residues: NADH-ubiquinone oxidoreductase chain 6 (175 aa).

5 consecutive transmembrane segments (helical) span residues 1 to 21 (MMTYIAFILSTILVVSFVGFS), 25 to 45 (SPIYGGLGLIVSGGVGCGIVL), 48 to 68 (GGSFLGLMVFLIYLGGMLVVF), 88 to 108 (TVLSLFVLGFMAELLFAGYCI), and 149 to 169 (YGTWLVIVTGWSLVIGVLVVM).

The protein belongs to the complex I subunit 6 family. Core subunit of respiratory chain NADH dehydrogenase (Complex I) which is composed of 45 different subunits.

The protein localises to the mitochondrion inner membrane. The enzyme catalyses a ubiquinone + NADH + 5 H(+)(in) = a ubiquinol + NAD(+) + 4 H(+)(out). Core subunit of the mitochondrial membrane respiratory chain NADH dehydrogenase (Complex I) which catalyzes electron transfer from NADH through the respiratory chain, using ubiquinone as an electron acceptor. Essential for the catalytic activity and assembly of complex I. This Urotrichus talpoides (Japanese shrew mole) protein is NADH-ubiquinone oxidoreductase chain 6 (MT-ND6).